We begin with the raw amino-acid sequence, 102 residues long: Integration host factor subunit alpha (102 aa).

The disordered stretch occupies residues 49–70 (FGNFQLRTKPQRPGRNPKTGEE).

It belongs to the bacterial histone-like protein family. As to quaternary structure, heterodimer of an alpha and a beta chain.

Its function is as follows. This protein is one of the two subunits of integration host factor, a specific DNA-binding protein that functions in genetic recombination as well as in transcriptional and translational control. This Nitrosomonas europaea (strain ATCC 19718 / CIP 103999 / KCTC 2705 / NBRC 14298) protein is Integration host factor subunit alpha.